We begin with the raw amino-acid sequence, 69 residues long: Ribosome modulation factor (69 aa).

Belongs to the ribosome modulation factor family.

It is found in the cytoplasm. In terms of biological role, during stationary phase, converts 70S ribosomes to an inactive dimeric form (100S ribosomes). The sequence is that of Ribosome modulation factor from Hahella chejuensis (strain KCTC 2396).